The chain runs to 204 residues: MKVKICGITDVETAKSACEYGADALGFVFAESKRKITPKRAKEIIQELPANVLKIGVFVNESVEVIQKIADECGLTHVQLHGDEDNYQIRRLNILCIKSLGVTSERDMKNAQRYETDYILFDSPKEKFHGGNGKTFSWELLGHMPKELRKKTILAGGLNALNIEEAIRTVRPYMVDVSSGVETEGKKDVEKIKQFIIKAKECSK.

It belongs to the TrpF family.

It catalyses the reaction N-(5-phospho-beta-D-ribosyl)anthranilate = 1-(2-carboxyphenylamino)-1-deoxy-D-ribulose 5-phosphate. Its pathway is amino-acid biosynthesis; L-tryptophan biosynthesis; L-tryptophan from chorismate: step 3/5. This is N-(5'-phosphoribosyl)anthranilate isomerase from Bacillus cereus (strain B4264).